The primary structure comprises 407 residues: 1-deoxy-D-xylulose 5-phosphate reductoisomerase (407 aa).

NADPH is bound by residues T10, G11, S12, I13, G36, and N131. K132 lines the 1-deoxy-D-xylulose 5-phosphate pocket. An NADPH-binding site is contributed by E133. D155 contributes to the Mn(2+) binding site. S156, E157, S181, and H204 together coordinate 1-deoxy-D-xylulose 5-phosphate. E157 lines the Mn(2+) pocket. G210 provides a ligand contact to NADPH. 4 residues coordinate 1-deoxy-D-xylulose 5-phosphate: S217, N222, K223, and E226. Residue E226 coordinates Mn(2+).

This sequence belongs to the DXR family. Requires Mg(2+) as cofactor. Mn(2+) serves as cofactor.

It carries out the reaction 2-C-methyl-D-erythritol 4-phosphate + NADP(+) = 1-deoxy-D-xylulose 5-phosphate + NADPH + H(+). The protein operates within isoprenoid biosynthesis; isopentenyl diphosphate biosynthesis via DXP pathway; isopentenyl diphosphate from 1-deoxy-D-xylulose 5-phosphate: step 1/6. Functionally, catalyzes the NADPH-dependent rearrangement and reduction of 1-deoxy-D-xylulose-5-phosphate (DXP) to 2-C-methyl-D-erythritol 4-phosphate (MEP). This is 1-deoxy-D-xylulose 5-phosphate reductoisomerase from Cutibacterium acnes (strain DSM 16379 / KPA171202) (Propionibacterium acnes).